Reading from the N-terminus, the 309-residue chain is G-protein coupled receptor 35 (309 aa).

Topologically, residues M1–Y24 are extracellular. Residue N2 is glycosylated (N-linked (GlcNAc...) asparagine). Residues A25–F45 form a helical membrane-spanning segment. At C46–R56 the chain is on the cytoplasmic side. Residues I57–L77 form a helical membrane-spanning segment. Topologically, residues H78–Q90 are extracellular. C89 and C162 are joined by a disulfide. The chain crosses the membrane as a helical span at residues L91–V112. At D113–A135 the chain is on the cytoplasmic side. Residues V136 to I156 form a helical membrane-spanning segment. The Extracellular segment spans residues Q157–A174. Residues F175–V195 form a helical membrane-spanning segment. At T196–M218 the chain is on the cytoplasmic side. The chain crosses the membrane as a helical span at residues V219–V239. Over R240–L258 the chain is Extracellular. A helical transmembrane segment spans residues Y259–M279. The Cytoplasmic portion of the chain corresponds to A280–A309. Phosphoserine occurs at positions 287 and 294. A phosphoserine; by GRK5 and GRK6 mark is found at S300 and S303. Residue T307 is modified to Phosphothreonine.

It belongs to the G-protein coupled receptor 1 family. As to quaternary structure, interacts with GNA13. Interacts with ARRB2. In terms of processing, multiply phosphorylated in clusters of serines and threonines in the C-terminal tail. Phosphorylation of Ser-300 and Ser-303 is mediated by GRK5 and/or GRK6. As to expression, predominantly expressed in immune and gastrointestinal tissues.

The protein resides in the cell membrane. G-protein coupled receptor that binds to several ligands including the tryptophan metabolite kynurenic acid (KYNA), lysophosphatidic acid (LPA) or 5-hydroxyindoleacetic acid (5-HIAA) with high affinity, leading to rapid and transient activation of numerous intracellular signaling pathways. Plays a role in neutrophil recruitment to sites of inflammation and bacterial clearance through the major serotonin metabolite 5-HIAA that acts as a physiological ligand. Stimulates lipid metabolism, thermogenic, and anti-inflammatory gene expression in adipose tissue once activated by kynurenic acid. In macrophages, activation by lysophosphatidic acid promotes GPR35-induced signaling with a distinct transcriptional profile characterized by TNF production associated with ERK and NF-kappa-B activation. In turn, induces chemotaxis of macrophages. The sequence is that of G-protein coupled receptor 35 (GPR35) from Homo sapiens (Human).